Reading from the N-terminus, the 196-residue chain is UPF0319 protein VV1_0237 (196 aa).

The signal sequence occupies residues Met-1 to Ala-19.

The protein belongs to the UPF0319 family.

The polypeptide is UPF0319 protein VV1_0237 (Vibrio vulnificus (strain CMCP6)).